Reading from the N-terminus, the 397-residue chain is S-adenosylmethionine synthase (397 aa).

His15 provides a ligand contact to ATP. Residue Asp17 coordinates Mg(2+). A K(+)-binding site is contributed by Glu43. Residues Glu56 and Gln99 each contribute to the L-methionine site. The tract at residues 99 to 109 (QSPDIAQGVTA) is flexible loop. ATP is bound by residues 173–175 (DGK), 242–243 (KF), Asp251, 257–258 (RK), Ala274, and Lys278. Asp251 lines the L-methionine pocket. Lys282 serves as a coordination point for L-methionine.

It belongs to the AdoMet synthase family. In terms of assembly, homotetramer; dimer of dimers. It depends on Mg(2+) as a cofactor. Requires K(+) as cofactor.

Its subcellular location is the cytoplasm. The enzyme catalyses L-methionine + ATP + H2O = S-adenosyl-L-methionine + phosphate + diphosphate. It participates in amino-acid biosynthesis; S-adenosyl-L-methionine biosynthesis; S-adenosyl-L-methionine from L-methionine: step 1/1. Its function is as follows. Catalyzes the formation of S-adenosylmethionine (AdoMet) from methionine and ATP. The overall synthetic reaction is composed of two sequential steps, AdoMet formation and the subsequent tripolyphosphate hydrolysis which occurs prior to release of AdoMet from the enzyme. The sequence is that of S-adenosylmethionine synthase from Cutibacterium acnes (strain DSM 16379 / KPA171202) (Propionibacterium acnes).